Consider the following 116-residue polypeptide: Cell cycle protein GpsB (116 aa).

A coiled-coil region spans residues 32–69 (LDDVIKDYETYSALVKELREENSRLKQELSKRMQEAPN). The interval 57–78 (KQELSKRMQEAPNSTASQVHQS) is disordered. Polar residues predominate over residues 67 to 78 (APNSTASQVHQS).

This sequence belongs to the GpsB family. Forms polymers through the coiled coil domains. Interacts with PBP1, MreC and EzrA.

The protein resides in the cytoplasm. Divisome component that associates with the complex late in its assembly, after the Z-ring is formed, and is dependent on DivIC and PBP2B for its recruitment to the divisome. Together with EzrA, is a key component of the system that regulates PBP1 localization during cell cycle progression. Its main role could be the removal of PBP1 from the cell pole after pole maturation is completed. Also contributes to the recruitment of PBP1 to the division complex. Not essential for septum formation. This chain is Cell cycle protein GpsB, found in Streptococcus gordonii (strain Challis / ATCC 35105 / BCRC 15272 / CH1 / DL1 / V288).